The chain runs to 612 residues: UvrABC system protein C (612 aa).

Residues 20 to 98 (THSGVYRMLD…IKQHRPKYNI (79 aa)) form the GIY-YIG domain. The UVR domain maps to 208-243 (SSVLEEISAKMYQASEDMEYEKAQVYRDQLVVLRKL).

This sequence belongs to the UvrC family. In terms of assembly, interacts with UvrB in an incision complex.

The protein localises to the cytoplasm. The UvrABC repair system catalyzes the recognition and processing of DNA lesions. UvrC both incises the 5' and 3' sides of the lesion. The N-terminal half is responsible for the 3' incision and the C-terminal half is responsible for the 5' incision. This is UvrABC system protein C from Francisella tularensis subsp. tularensis (strain WY96-3418).